We begin with the raw amino-acid sequence, 373 residues long: MLPFLRSELARCQPHHPNPGGTGMAMDILDTNECPYDLPTDLKQTLADRYVEAIASNRYPDGSHTDLKAAIVDYLSEQTAGQWQPGPEHVTVGNGSDELIRSILIATCLGGQGSVLVAEPTFSMYGIVAETLGIPVVRIGRDPQTWEMDLAAAETAITQTEGTPVRLCFVVHPNSPTANPLTEAEKDWLRQVPPQILVVIDEAYFEFSGETLLAELPQHPNWLITRTFSKALRLAAHRVGYGIGDPQLIAALEAIRLPYNLPSVAQLAATLALEARSQLLSAIPRLITERDRLYRKLQVVSQLQVWPSASNFLFLKTQSSSQTAALAAQLKAQGTLVRHTADGLRITIGSPAENERTLAHLQTAITQSLPATV.

K230 carries the N6-(pyridoxal phosphate)lysine modification.

Belongs to the class-II pyridoxal-phosphate-dependent aminotransferase family. Histidinol-phosphate aminotransferase subfamily. Homodimer. Pyridoxal 5'-phosphate serves as cofactor.

It catalyses the reaction L-histidinol phosphate + 2-oxoglutarate = 3-(imidazol-4-yl)-2-oxopropyl phosphate + L-glutamate. Its pathway is amino-acid biosynthesis; L-histidine biosynthesis; L-histidine from 5-phospho-alpha-D-ribose 1-diphosphate: step 7/9. This Synechococcus sp. (strain ATCC 27144 / PCC 6301 / SAUG 1402/1) (Anacystis nidulans) protein is Histidinol-phosphate aminotransferase.